A 452-amino-acid polypeptide reads, in one-letter code: GTPase Der (452 aa).

2 consecutive EngA-type G domains span residues 4 to 169 and 177 to 352; these read PIVA…PTTE and IKVA…ASHR. GTP is bound by residues 10–17, 57–61, 120–123, 183–190, 230–234, and 295–298; these read GRPNVGKS, DTGGL, NKCE, DTAGI, and NKWD. The KH-like domain maps to 353–438; the sequence is RRVSTAVINE…PIRLIWRGKS (86 aa).

The protein belongs to the TRAFAC class TrmE-Era-EngA-EngB-Septin-like GTPase superfamily. EngA (Der) GTPase family. As to quaternary structure, associates with the 50S ribosomal subunit.

Functionally, GTPase that plays an essential role in the late steps of ribosome biogenesis. The polypeptide is GTPase Der (Gloeothece citriformis (strain PCC 7424) (Cyanothece sp. (strain PCC 7424))).